The chain runs to 359 residues: MQTLTVDLGDRSYPIHIGAALLTRADLVLPHLAQKRVMVVTNTTVGPLYLAQLKAALEAAGVRVAEVVLPDGEAYKNWETLNLVFDALLRERAERKTTLIALGGGVIGDMTGFAAACYQRGVPFIQIPTTLLSQVDSSVGGKTGINHPLGKNMIGAFYQPKLVLADAATLGTLPARELSAGLAEVIKYGLIWDVEFLAWLEANMDRLRALDAEAISHAIYRSCEIKAQVVAEDEREGGLRAILNLGHTFGHAIETGMGYGAWLHGEAVAAGMVLAAETSQRLGWLGEADVARTRALIRAAGLPDVAPNLGVDAYLEYMGHDKKVEGGKMRFVLLKKLGEAVITDAVPADVLTAVLTPPH.

NAD(+)-binding positions include Asp71–Lys76, Gly105–Asp109, Thr129–Thr130, Lys142, Lys151, and Thr169–Thr172. Glu184, His247, and His264 together coordinate Zn(2+).

Belongs to the sugar phosphate cyclases superfamily. Dehydroquinate synthase family. It depends on Co(2+) as a cofactor. The cofactor is Zn(2+). NAD(+) serves as cofactor.

It localises to the cytoplasm. It catalyses the reaction 7-phospho-2-dehydro-3-deoxy-D-arabino-heptonate = 3-dehydroquinate + phosphate. Its pathway is metabolic intermediate biosynthesis; chorismate biosynthesis; chorismate from D-erythrose 4-phosphate and phosphoenolpyruvate: step 2/7. Its function is as follows. Catalyzes the conversion of 3-deoxy-D-arabino-heptulosonate 7-phosphate (DAHP) to dehydroquinate (DHQ). The sequence is that of 3-dehydroquinate synthase from Thiobacillus denitrificans (strain ATCC 25259 / T1).